The following is a 503-amino-acid chain: UPF0522 protein C (503 aa).

An N-terminal signal peptide occupies residues 1–18; that stretch reads MKLFILIILSICLALVNS. Asn-330, Asn-337, and Asn-370 each carry an N-linked (GlcNAc...) asparagine glycan.

Belongs to the UPF0522 family.

The protein resides in the secreted. This chain is UPF0522 protein C, found in Dictyostelium discoideum (Social amoeba).